We begin with the raw amino-acid sequence, 1058 residues long: Carbamoyl phosphate synthase large chain (1058 aa).

Residues 1 to 401 (MPKRKDIQKI…SLLKACRSLE (401 aa)) form a carboxyphosphate synthetic domain region. ATP contacts are provided by arginine 129, arginine 169, glycine 175, glycine 176, arginine 208, isoleucine 210, glutamate 215, glycine 241, isoleucine 242, histidine 243, glutamine 284, and glutamate 298. The ATP-grasp 1 domain maps to 133–327 (KQLMQELDQP…IAKLAAKIAV (195 aa)). Mg(2+) contacts are provided by glutamine 284, glutamate 298, and asparagine 300. Mn(2+) contacts are provided by glutamine 284, glutamate 298, and asparagine 300. The segment at 402-546 (IGVCHNEMTS…YSTYELENES (145 aa)) is oligomerization domain. Residues 547–929 (VQSNKESILV…ALYKAFEANN (383 aa)) form a carbamoyl phosphate synthetic domain region. In terms of domain architecture, ATP-grasp 2 spans 671-861 (EKALKELGIP…MAQIATKLIL (191 aa)). ATP contacts are provided by arginine 707, serine 746, isoleucine 748, glutamate 752, glycine 777, valine 778, histidine 779, serine 780, glutamine 820, and glutamate 832. Residues glutamine 820, glutamate 832, and asparagine 834 each contribute to the Mg(2+) site. The Mn(2+) site is built by glutamine 820, glutamate 832, and asparagine 834. In terms of domain architecture, MGS-like spans 930–1058 (SHLSEFGQIV…ESRCFNIEAI (129 aa)). The interval 930–1058 (SHLSEFGQIV…ESRCFNIEAI (129 aa)) is allosteric domain.

Belongs to the CarB family. In terms of assembly, composed of two chains; the small (or glutamine) chain promotes the hydrolysis of glutamine to ammonia, which is used by the large (or ammonia) chain to synthesize carbamoyl phosphate. Tetramer of heterodimers (alpha,beta)4. Mg(2+) is required as a cofactor. Mn(2+) serves as cofactor.

It carries out the reaction hydrogencarbonate + L-glutamine + 2 ATP + H2O = carbamoyl phosphate + L-glutamate + 2 ADP + phosphate + 2 H(+). The enzyme catalyses hydrogencarbonate + NH4(+) + 2 ATP = carbamoyl phosphate + 2 ADP + phosphate + 2 H(+). It functions in the pathway amino-acid biosynthesis; L-arginine biosynthesis; carbamoyl phosphate from bicarbonate: step 1/1. Its pathway is pyrimidine metabolism; UMP biosynthesis via de novo pathway; (S)-dihydroorotate from bicarbonate: step 1/3. Functionally, large subunit of the glutamine-dependent carbamoyl phosphate synthetase (CPSase). CPSase catalyzes the formation of carbamoyl phosphate from the ammonia moiety of glutamine, carbonate, and phosphate donated by ATP, constituting the first step of 2 biosynthetic pathways, one leading to arginine and/or urea and the other to pyrimidine nucleotides. The large subunit (synthetase) binds the substrates ammonia (free or transferred from glutamine from the small subunit), hydrogencarbonate and ATP and carries out an ATP-coupled ligase reaction, activating hydrogencarbonate by forming carboxy phosphate which reacts with ammonia to form carbamoyl phosphate. In Streptococcus pyogenes serotype M6 (strain ATCC BAA-946 / MGAS10394), this protein is Carbamoyl phosphate synthase large chain.